The following is a 1105-amino-acid chain: Serine/threonine-protein kinase 4 homolog B (1105 aa).

One can recognise a Protein kinase domain in the interval 23 to 274 (FDLIECLGRG…AKDLLKHSFF (252 aa)). ATP-binding positions include 29–37 (LGRGSFGSV) and K52. D142 (proton acceptor) is an active-site residue. Disordered regions lie at residues 348–396 (STQI…TKNN), 411–482 (SSSA…RQPA), and 495–541 (PSFG…SLPL). Composition is skewed to low complexity over residues 358–396 (QAQQ…TKNN) and 411–437 (SSSA…TTTN). A compositionally biased stretch (polar residues) spans 438-458 (DYHTGNGRTSSSSPQFGLQHQ). 2 stretches are compositionally biased toward low complexity: residues 459–473 (NSSN…TVPS) and 513–541 (PIGS…SLPL). Residues 516–1105 (SPITKRPTPT…SEFDLDFYNN (590 aa)) are calpain-like cysteine protease-like. 4 domain III regions span residues 641-668 (EVSA…EGSF), 791-830 (VHTQ…QGSI), 836-972 (SEQI…NVIQ), and 1076-1103 (VVIP…LDFY).

It in the N-terminal section; belongs to the protein kinase superfamily. STE Ser/Thr protein kinase family. STE20 subfamily. This sequence in the C-terminal section; belongs to the peptidase C2 family. It depends on Mn(2+) as a cofactor.

The catalysed reaction is L-seryl-[protein] + ATP = O-phospho-L-seryl-[protein] + ADP + H(+). It carries out the reaction L-threonyl-[protein] + ATP = O-phospho-L-threonyl-[protein] + ADP + H(+). Functionally, probable serine/threonine-protein kinase. In Dictyostelium discoideum (Social amoeba), this protein is Serine/threonine-protein kinase 4 homolog B (krsB).